Consider the following 331-residue polypeptide: Adenosine deaminase (331 aa).

Residues His-12 and His-14 each contribute to the Zn(2+) site. Substrate is bound by residues His-14, Asp-16, and Gly-170. Zn(2+) is bound at residue His-197. Residue Glu-200 is the Proton donor of the active site. Residue Asp-278 participates in Zn(2+) binding. Asp-279 is a binding site for substrate.

It belongs to the metallo-dependent hydrolases superfamily. Adenosine and AMP deaminases family. Adenosine deaminase subfamily. It depends on Zn(2+) as a cofactor.

The enzyme catalyses adenosine + H2O + H(+) = inosine + NH4(+). It catalyses the reaction 2'-deoxyadenosine + H2O + H(+) = 2'-deoxyinosine + NH4(+). Functionally, catalyzes the hydrolytic deamination of adenosine and 2-deoxyadenosine. The polypeptide is Adenosine deaminase (Shewanella baltica (strain OS185)).